A 495-amino-acid polypeptide reads, in one-letter code: T-cell surface glycoprotein CD5 (495 aa).

The N-terminal stretch at 1 to 24 (MPMGSLQPLATLYLLGMLVASCLG) is a signal peptide. Residues 25 to 372 (RLSWYDPDFQ…VFVTCQDPNP (348 aa)) are Extracellular-facing. Residues 35 to 133 (ARLTRSNSKC…MCHSLGLTCL (99 aa)) form the SRCR 1 domain. 4 cysteine pairs are disulfide-bonded: cysteine 44/cysteine 86, cysteine 60/cysteine 125, cysteine 81/cysteine 132, and cysteine 107/cysteine 117. An N-linked (GlcNAc...) asparagine glycan is attached at asparagine 116. A disordered region spans residues 136-155 (QKTTPPTTRPPPTTTPEPTA). A compositionally biased stretch (pro residues) spans 142 to 155 (TTRPPPTTTPEPTA). 2 SRCR domains span residues 159–268 (LQLV…LLCS) and 276–368 (SRLV…VTCQ). 6 cysteine pairs are disulfide-bonded: cysteine 201-cysteine 267, cysteine 244-cysteine 250, cysteine 285-cysteine 321, cysteine 301-cysteine 360, cysteine 316-cysteine 367, and cysteine 342-cysteine 350. Asparagine 241 is a glycosylation site (N-linked (GlcNAc...) asparagine). The chain crosses the membrane as a helical span at residues 373 to 402 (AGLAAGTVASIILALVLLVVLLVVCGPLAY). The Cytoplasmic portion of the chain corresponds to 403 to 495 (KKLVKKFRQK…DYDLHGAQRL (93 aa)). Disordered regions lie at residues 436–460 (TVRS…PRNS) and 473–495 (HRSS…AQRL). A Phosphoserine modification is found at serine 439. Tyrosine 453 carries the phosphotyrosine modification. Residues serine 460, serine 483, and serine 485 each carry the phosphoserine modification. Polar residues predominate over residues 475–484 (SSMQPDNSSD).

In terms of assembly, interacts with CD72/LYB-2. Interacts with PTPN6/SHP-1. Interacts with CBL. Interacts with CD5L. Interacts with CD3Z/CD247. Post-translationally, phosphorylated on serine, threonine and tyrosine residues following TCR stimulation. Phosphorylated by LCK on Tyr-453 and Tyr-487 upon TCR engagement.

The protein localises to the cell membrane. In terms of biological role, lymphoid-specific receptor expressed by all T-cells and in a subset of B-cells known as B1a cells. Plays a role in the regulation of TCR and BCR signaling, thymocyte selection, T-cell effector differentiation and immune tolerance. Acts by interacting with several ligands expressed on B-cells such as CD5L or CD72 and thereby plays an important role in contact-mediated, T-dependent B-cell activation and in the maintenance of regulatory T and B-cell homeostasis. Functions as a negative regulator of TCR signaling during thymocyte development by associating with several signaling proteins including LCK, CD3Z chain, PI3K or CBL. Mechanistically, co-engagement of CD3 with CD5 enhances phosphorylated CBL recruitment leading to increased VAV1 phosphorylation and degradation. Modulates B-cell biology through ERK1/2 activation in a Ca(2+)-dependent pathway via the non-selective Ca(2+) channel TRPC1, leading to IL-10 production. This Homo sapiens (Human) protein is T-cell surface glycoprotein CD5 (CD5).